We begin with the raw amino-acid sequence, 544 residues long: Membrane protein insertase YidC (544 aa).

5 helical membrane-spanning segments follow: residues 15 to 35 (LFLIGLFMLINDIFSSIMLSF), 321 to 341 (LWYLIQVPMQMVMQVFYDVIP), 343 to 363 (WGLSIIFLTIVVRILIFPLTF), 409 to 429 (LGGCFPVILQLPIFFALYSLV), and 506 to 526 (MPIMFFFILYNMPSGLLIYWI).

This sequence belongs to the OXA1/ALB3/YidC family. Type 1 subfamily. Interacts with the Sec translocase complex via SecD. Specifically interacts with transmembrane segments of nascent integral membrane proteins during membrane integration.

The protein localises to the cell inner membrane. Its function is as follows. Required for the insertion and/or proper folding and/or complex formation of integral membrane proteins into the membrane. Involved in integration of membrane proteins that insert both dependently and independently of the Sec translocase complex, as well as at least some lipoproteins. Aids folding of multispanning membrane proteins. This is Membrane protein insertase YidC from Borrelia garinii subsp. bavariensis (strain ATCC BAA-2496 / DSM 23469 / PBi) (Borreliella bavariensis).